The sequence spans 359 residues: 4-hydroxy-3-methylbut-2-en-1-yl diphosphate synthase (flavodoxin) (359 aa).

[4Fe-4S] cluster-binding residues include cysteine 265, cysteine 268, cysteine 300, and glutamate 307.

This sequence belongs to the IspG family. [4Fe-4S] cluster serves as cofactor.

It carries out the reaction (2E)-4-hydroxy-3-methylbut-2-enyl diphosphate + oxidized [flavodoxin] + H2O + 2 H(+) = 2-C-methyl-D-erythritol 2,4-cyclic diphosphate + reduced [flavodoxin]. The protein operates within isoprenoid biosynthesis; isopentenyl diphosphate biosynthesis via DXP pathway; isopentenyl diphosphate from 1-deoxy-D-xylulose 5-phosphate: step 5/6. In terms of biological role, converts 2C-methyl-D-erythritol 2,4-cyclodiphosphate (ME-2,4cPP) into 1-hydroxy-2-methyl-2-(E)-butenyl 4-diphosphate. The chain is 4-hydroxy-3-methylbut-2-en-1-yl diphosphate synthase (flavodoxin) from Lawsonia intracellularis (strain PHE/MN1-00).